Consider the following 479-residue polypeptide: Poly(A) polymerase catalytic subunit (479 aa).

Catalysis depends on residues Asp202 and Asp204. Asp202, Asp204, and Asp253 together coordinate Ca(2+).

This sequence belongs to the poxviridae poly(A) polymerase catalytic subunit family. In terms of assembly, heterodimer of a large (catalytic) subunit and a small (regulatory) subunit.

The catalysed reaction is RNA(n) + ATP = RNA(n)-3'-adenine ribonucleotide + diphosphate. Its function is as follows. Polymerase that creates the 3'-poly(A) tail of mRNA's. This Homo sapiens (Human) protein is Poly(A) polymerase catalytic subunit (OPG063).